The sequence spans 255 residues: Aliphatic sulfonates import ATP-binding protein SsuB (255 aa).

Residues 12–233 (LLLNAVSKHY…RLGSVRLAEL (222 aa)) enclose the ABC transporter domain. 44–51 (GRSGGGKS) is an ATP binding site.

Belongs to the ABC transporter superfamily. Aliphatic sulfonates importer (TC 3.A.1.17.2) family. The complex is composed of two ATP-binding proteins (SsuB), two transmembrane proteins (SsuC) and a solute-binding protein (SsuA).

The protein resides in the cell inner membrane. The enzyme catalyses ATP + H2O + aliphatic sulfonate-[sulfonate-binding protein]Side 1 = ADP + phosphate + aliphatic sulfonateSide 2 + [sulfonate-binding protein]Side 1.. Functionally, part of the ABC transporter complex SsuABC involved in aliphatic sulfonates import. Responsible for energy coupling to the transport system. The chain is Aliphatic sulfonates import ATP-binding protein SsuB from Shigella flexneri.